A 396-amino-acid chain; its full sequence is Acyl-[acyl-carrier-protein] desaturase, chloroplastic (396 aa).

Residues 1 to 33 (MALKFHPLTSQSPKLPSFRMPQLASLRSPKFVM) constitute a chloroplast transit peptide. Residues glutamate 138, glutamate 176, histidine 179, glutamate 229, glutamate 262, and histidine 265 each contribute to the Fe cation site.

It belongs to the fatty acid desaturase type 2 family. As to quaternary structure, homodimer. It depends on Fe(2+) as a cofactor.

The protein localises to the plastid. It is found in the chloroplast. Its pathway is lipid metabolism; fatty acid metabolism. In terms of biological role, introduces a cis double bond in the acyl chain of an acyl-[acyl-carrier protein]. The protein is Acyl-[acyl-carrier-protein] desaturase, chloroplastic of Cucumis sativus (Cucumber).